Here is an 824-residue protein sequence, read N- to C-terminus: Acyl-homoserine lactone acylase QuiP (824 aa).

An N-terminal signal peptide occupies residues 1–26 (MASPALRHFLPRFGAAAAAASFLSLA). The active-site Nucleophile is Ser264.

It belongs to the peptidase S45 family. As to quaternary structure, heterodimer of an alpha subunit and a beta subunit processed from the same precursor.

It localises to the periplasm. It catalyses the reaction an N-acyl-L-homoserine lactone + H2O = L-homoserine lactone + a carboxylate. In terms of biological role, catalyzes the deacylation of acyl-homoserine lactone (AHL or acyl-HSL), releasing homoserine lactone (HSL) and the corresponding fatty acid. Possesses a specificity for the degradation of long-chain acyl-HSLs (side chains of seven or more carbons in length). The chain is Acyl-homoserine lactone acylase QuiP (quiP) from Pseudomonas syringae pv. tomato (strain ATCC BAA-871 / DC3000).